Consider the following 271-residue polypeptide: Hachiman protein HamA (271 aa).

In terms of biological role, component of antiviral defense system Hachiman, composed of HamA and HamB. Expression of Hachiman in B.subtilis (strain BEST7003) confers resistance to phages phi105, phi29, phi3T, rho14, SBSphiJ, SpBeta and SPR. This chain is Hachiman protein HamA, found in Bacillus cereus.